The chain runs to 135 residues: BolA-like protein 1 (135 aa).

Ser-81 is modified (phosphoserine). Residues 114–135 (WKENPQLDTSPACLGGSKKSRN) are disordered.

It belongs to the BolA/IbaG family. Interacts with GLRX5.

It localises to the mitochondrion. Functionally, acts as a mitochondrial iron-sulfur (Fe-S) cluster assembly factor that facilitates (Fe-S) cluster insertion into a subset of mitochondrial proteins. Probably acts together with the monothiol glutaredoxin GLRX5. May protect cells against oxidative stress. This chain is BolA-like protein 1 (BOLA1), found in Bos taurus (Bovine).